The chain runs to 491 residues: Acetyl-coenzyme A carboxylase carboxyl transferase subunit beta (491 aa).

The 360-residue stretch at 132-491 folds into the CoA carboxyltransferase N-terminal domain; the sequence is LWNQCENCFI…ISELLNLHAL (360 aa). Residues Cys-136, Cys-139, Cys-155, and Cys-158 each contribute to the Zn(2+) site. Residues 136–158 form a C4-type zinc finger; the sequence is CENCFIPNYKKVLKSNMQICEEC. Residues 252–262 show a composition bias toward basic and acidic residues; it reads EKVEEWTKPDL. 2 disordered regions span residues 252–273 and 279–298; these read EKVEEWTKPDLDEGEESQDEER and DKGEESQEIEDSEANDEDDD. Acidic residues predominate over residues 284-298; the sequence is SQEIEDSEANDEDDD.

Belongs to the AccD/PCCB family. As to quaternary structure, acetyl-CoA carboxylase is a heterohexamer composed of biotin carboxyl carrier protein, biotin carboxylase and 2 subunits each of ACCase subunit alpha and ACCase plastid-coded subunit beta (accD). Zn(2+) serves as cofactor.

The protein resides in the plastid. It carries out the reaction N(6)-carboxybiotinyl-L-lysyl-[protein] + acetyl-CoA = N(6)-biotinyl-L-lysyl-[protein] + malonyl-CoA. The protein operates within lipid metabolism; malonyl-CoA biosynthesis; malonyl-CoA from acetyl-CoA: step 1/1. Functionally, component of the acetyl coenzyme A carboxylase (ACC) complex. Biotin carboxylase (BC) catalyzes the carboxylation of biotin on its carrier protein (BCCP) and then the CO(2) group is transferred by the transcarboxylase to acetyl-CoA to form malonyl-CoA. In Cuscuta gronovii (Common dodder), this protein is Acetyl-coenzyme A carboxylase carboxyl transferase subunit beta.